Reading from the N-terminus, the 362-residue chain is tRNA-specific 2-thiouridylase MnmA (362 aa).

ATP contacts are provided by residues 8–15 and methionine 35; that span reads AMSGGVDS. The interval 95–97 is interaction with target base in tRNA; the sequence is NPD. Cysteine 100 serves as the catalytic Nucleophile. Cysteine 100 and cysteine 196 are oxidised to a cystine. Glycine 124 contacts ATP. Residues 146–148 are interaction with tRNA; that stretch reads KDQ. Cysteine 196 serves as the catalytic Cysteine persulfide intermediate. Residues 303–304 are interaction with tRNA; that stretch reads RY.

The protein belongs to the MnmA/TRMU family.

The protein localises to the cytoplasm. The enzyme catalyses S-sulfanyl-L-cysteinyl-[protein] + uridine(34) in tRNA + AH2 + ATP = 2-thiouridine(34) in tRNA + L-cysteinyl-[protein] + A + AMP + diphosphate + H(+). Functionally, catalyzes the 2-thiolation of uridine at the wobble position (U34) of tRNA, leading to the formation of s(2)U34. The protein is tRNA-specific 2-thiouridylase MnmA of Chlamydia abortus (strain DSM 27085 / S26/3) (Chlamydophila abortus).